Consider the following 1273-residue polypeptide: MERIHVSVRARPLSSEDAKTSPWKISSDSIFMPNHSSLAFEFDRIFREDCKTVQVYEARTKEIVSAAVRGFNGTVFAYGQTNSGKTHTMRGSPIEPGVIPLAVHDLFDTIYQDASREFLLRMSYLEIYNEDINDLLAPEHRKLQIHENLEKGIFVAGLREEIVASPQQVLEMMEFGESHRHIGETNMNLYSSRSHTIFRMIIESRQKMQDEGVGNSCDAVRVSVLNLVDLAGSERAAKTGAEGVRLKEGSHINKSLMTLGTVIKKLSEGVETQGGHVPYRDSKLTRILQPALGGNANTAIICNITLAPIHADETKSSLQFASRALRVTNCAHVNEILTDAALLKRQKKEIEELRSKLKTSHSDHSEEEILNLRNTLLKSELERERIALELEEEKKAQAQRERVLQEQAKKIKNLSSMVLLSNRDEKREQDHFKKGKRRDTWCIGKLSRDSTSEDQSNVLSRGSSLESARSERETGPLLPFSELVNEPLYNINEEDEDSIEGTLEDSVLPDPCALVNVTSRKKPSIKQKNPVVVENELDRIQREYEALLLQYETERIISEIQIECLKVKLGEDGLSGDAKCKQSEVVGNVHCEEHVVNLRDPEAILLIKQLQEKINMLELEKSSSNRNLDDLVMVATEQNICAREKFAEIQEEIHAAREEAQVAREQLVSKESEVIDVINENFNSLVNVATEIEVLESEFQKYKASVETISSVMNEGLQDFAFFSPLIHDFTLFVRQSSEQHDSLINSYQTVQSSLKKKVLDVENEKLLLQEQCAGLQSQIEELNQEAQKHETSLKMLSEHHESERSDLLSHIECLEKDIGSLSSSSLAKEKENLRKDFEKTKTKLKDTESKLKNSMQDKTKLEAEKASAERELKRLHSQKALLERDISKQESFAGKRRDSLLVERSANQSLQEEFKQLEVLAFEMETTIASLEEELAAERGEKEEALCRNDGLGSEITDLTEKLEHSNTKLEHLQNDVTELKTRLEVSSSDQQQLETNVKQLLEEKEELAMHLANSLLEMEEEKAIWSSKEKALTEAVEEKIRLYKNIQIESLSKEMSEEKKELESCRLECVTLADRLRCSEENAKQDKESSLEKSLEIDRLGDELRSADAVSKQSQEVLKSDIDILKSEVQHACKMSDTFQREMDYVTSERQGLLARIEELSKELASSNRWQIENAKNPIQDLTLKISSQETNLHKDAAAENKEKAKLKMRLRGMQARLDAISLRYKQSVQESELMNRKFKEASAKLKEKLASKALEVLDLKKQLSASSRTM.

Residues 3–327 (RIHVSVRARP…LQFASRALRV (325 aa)) enclose the Kinesin motor domain. 79–86 (GQTNSGKT) is a binding site for ATP. Residues 333 to 408 (VNEILTDAAL…QRERVLQEQA (76 aa)) are a coiled coil. Residues 452–474 (SEDQSNVLSRGSSLESARSERET) are disordered. Positions 453 to 467 (EDQSNVLSRGSSLES) are enriched in polar residues. Coiled-coil stretches lie at residues 602–674 (EAIL…ESEV) and 751–1023 (VQSS…MEEE).

This sequence belongs to the TRAFAC class myosin-kinesin ATPase superfamily. Kinesin family. KIN-7 subfamily.

The sequence is that of Kinesin-like protein KIN-7O from Arabidopsis thaliana (Mouse-ear cress).